The chain runs to 521 residues: Vascular endothelial zinc finger 1 (521 aa).

The C2H2-type 1 zinc-finger motif lies at 74 to 96 (FVCTYCSKAFRDSYHLRRHESCH). Residues 140-155 (TTSSSGTNPSSSASTT) show a composition bias toward low complexity. Residues 140 to 167 (TTSSSGTNPSSSASTTAMPVTQSVKKPS) are disordered. 5 C2H2-type zinc fingers span residues 174–196 (HACE…KLSH), 202–224 (FECP…VRSH), 232–255 (YTCS…KHVH), 261–283 (FKCQ…MVRH), and 287–308 (VSCN…LKTH). N6-acetyllysine is present on Lys362. A run of 4 repeats spans residues 394-400 (PVTLTTP), 445-451 (PVTITSP), 457-463 (PLTLTTP), and 479-485 (PVTITSP). The tract at residues 394–485 (PVTLTTPFSI…IAHPVTITSP (92 aa)) is 4 X 7 AA repeats of P-[LV]-T-[IL]-T-[ST]-P.

The protein belongs to the krueppel C2H2-type zinc-finger protein family. Interacts with ARHGAP22. In terms of tissue distribution, ubiquitously expressed. Highest levels in skeletal muscle and kidney.

It is found in the nucleus. Its function is as follows. Possible transcription factor. Specifically binds to the CT/GC-rich region of the interleukin-3 promoter and mediates tax transactivation of IL-3. The chain is Vascular endothelial zinc finger 1 (VEZF1) from Homo sapiens (Human).